A 490-amino-acid polypeptide reads, in one-letter code: Apocarotenoid-15,15'-oxygenase (490 aa).

H183 provides a ligand contact to Fe cation. S206 is a substrate binding site. Position 238 (H238) interacts with Fe cation. Substrate is bound at residue F303. Positions 304 and 484 each coordinate Fe cation.

Belongs to the carotenoid oxygenase family. Requires Fe(2+) as cofactor.

It catalyses the reaction all-trans-8'-apo-beta-carotenal + O2 = (2E,4E,6E)-2,6-dimethylocta-2,4,6-trienedial + all-trans-retinal. Cleaves a number of carotenals and carotenols in the all-trans configuration at the 15-15' double bond producing retinal or retinol, respectively. Also shows activity toward lycopenals and the corresponding alcohols. Does not cleave beta-carotene or lycopene. The sequence is that of Apocarotenoid-15,15'-oxygenase from Synechocystis sp. (strain ATCC 27184 / PCC 6803 / Kazusa).